We begin with the raw amino-acid sequence, 148 residues long: Large ribosomal subunit protein uL15 (148 aa).

The tract at residues 1 to 61 (MKINDLKPAP…GGQMPLQRRV (61 aa)) is disordered.

It belongs to the universal ribosomal protein uL15 family. Part of the 50S ribosomal subunit.

Functionally, binds to the 23S rRNA. The protein is Large ribosomal subunit protein uL15 of Thermodesulfovibrio yellowstonii (strain ATCC 51303 / DSM 11347 / YP87).